Consider the following 143-residue polypeptide: Type II secretion system core protein G (143 aa).

Residues 1-8 constitute a propeptide, leader sequence; that stretch reads MQKRRQSG. An N-methylphenylalanine modification is found at F9. The chain crosses the membrane as a helical span at residues 9 to 29; the sequence is FTLLEVMVVIVILGILASLVV. The interval 70-92 is disordered; it reads QGLDALVNKPTAAPEPRSYRDGG.

It belongs to the GSP G family. In terms of assembly, type II secretion system is composed of four main components: the outer membrane complex, the inner membrane complex, the cytoplasmic secretion ATPase and the periplasm-spanning pseudopilus. Forms homomultimers. Cleaved by the prepilin peptidase. Post-translationally, methylated by prepilin peptidase at the amino group of the N-terminal phenylalanine once the leader sequence is cleaved.

The protein resides in the cell inner membrane. In terms of biological role, core component of the type II secretion system required for the energy-dependent secretion of extracellular factors such as proteases and toxins from the periplasm. Pseudopilin (pilin-like) protein that polymerizes to form the pseudopilus. Further polymerization triggers pseudopilus growth. This Aeromonas hydrophila protein is Type II secretion system core protein G (exeG).